A 71-amino-acid polypeptide reads, in one-letter code: Peptide Ctri10261 (71 aa).

A signal peptide spans 1–23 (MKIPLILVTIAIILLMVPTESDA). At phenylalanine 37 the chain carries Phenylalanine amide. A propeptide spanning residues 41–71 (SLKNRDYFDYMQDPSLSNADLRELEELLEDY) is cleaved from the precursor.

This sequence belongs to the non-disulfide-bridged peptide (NDBP) superfamily. Short antimicrobial peptide (group 4) family. As to expression, expressed by the venom gland.

The protein resides in the secreted. In terms of biological role, antimicrobial peptide. This chain is Peptide Ctri10261, found in Chaerilus tricostatus (Scorpion).